Here is a 222-residue protein sequence, read N- to C-terminus: E3 ubiquitin-protein ligase RNF138 (222 aa).

The segment at 17-57 (CPVCQEILQTPVRTQTCRHVFCRKCFMLAMKSGGAYCPLCR) adopts an RING-type zinc-finger fold. Zn(2+) is bound by residues Cys85, Cys88, His100, and Cys104. A C2HC RNF-type zinc finger spans residues 85 to 104 (CMYCGKMMKLHYMKLHYKSC). 2 C2H2-type zinc fingers span residues 134–157 (YKCP…NNVH) and 164–192 (MVCP…NARH). In terms of domain architecture, UIM spans 202–220 (INIDEEAQFQIAVANSYKI).

In terms of assembly, interacts with nlk.2 (via C-terminus) and ube2k. In terms of processing, auto-ubiquitinated.

The protein localises to the chromosome. It carries out the reaction S-ubiquitinyl-[E2 ubiquitin-conjugating enzyme]-L-cysteine + [acceptor protein]-L-lysine = [E2 ubiquitin-conjugating enzyme]-L-cysteine + N(6)-ubiquitinyl-[acceptor protein]-L-lysine.. It participates in protein modification; protein ubiquitination. E3 ubiquitin-protein ligase involved in DNA damage response by promoting DNA resection and homologous recombination. Recruited to sites of double-strand breaks following DNA damage and specifically promotes double-strand break repair via homologous recombination. Together with nlk.2, involved in the ubiquitination and degradation of TCF/LEF. Also exhibits auto-ubiquitination activity in combination with ube2k. May act as a negative regulator in the Wnt/beta-catenin-mediated signaling pathway. The protein is E3 ubiquitin-protein ligase RNF138 (rnf138) of Xenopus laevis (African clawed frog).